Reading from the N-terminus, the 131-residue chain is uncharacterized protein (131 aa).

Positions 1-16 (MDVLFVAIFAVPLILG) are cleaved as a signal peptide.

The protein resides in the secreted. This is an uncharacterized protein from Homo sapiens (Human).